The primary structure comprises 601 residues: Elongation factor 4 (601 aa).

One can recognise a tr-type G domain in the interval 6–188 (SHIRNFSIIA…QIVHRVPAPE (183 aa)). Residues 18–23 (DHGKST) and 135–138 (NKID) each bind GTP.

The protein belongs to the TRAFAC class translation factor GTPase superfamily. Classic translation factor GTPase family. LepA subfamily.

It localises to the cell inner membrane. The enzyme catalyses GTP + H2O = GDP + phosphate + H(+). Its function is as follows. Required for accurate and efficient protein synthesis under certain stress conditions. May act as a fidelity factor of the translation reaction, by catalyzing a one-codon backward translocation of tRNAs on improperly translocated ribosomes. Back-translocation proceeds from a post-translocation (POST) complex to a pre-translocation (PRE) complex, thus giving elongation factor G a second chance to translocate the tRNAs correctly. Binds to ribosomes in a GTP-dependent manner. This Anaeromyxobacter sp. (strain K) protein is Elongation factor 4.